Consider the following 199-residue polypeptide: Small ribosomal subunit protein uS5 (199 aa).

Residues 1-28 (MARTPNTDRRQRGGDDQRNRSPRSDERD) form a disordered region. The 64-residue stretch at 31 to 94 (FLDKLVHINR…DQAKRTMIKV (64 aa)) folds into the S5 DRBM domain.

Belongs to the universal ribosomal protein uS5 family. In terms of assembly, part of the 30S ribosomal subunit. Contacts proteins S4 and S8.

In terms of biological role, with S4 and S12 plays an important role in translational accuracy. Its function is as follows. Located at the back of the 30S subunit body where it stabilizes the conformation of the head with respect to the body. This chain is Small ribosomal subunit protein uS5, found in Rhodospirillum rubrum (strain ATCC 11170 / ATH 1.1.1 / DSM 467 / LMG 4362 / NCIMB 8255 / S1).